A 357-amino-acid polypeptide reads, in one-letter code: Sulfate/thiosulfate import ATP-binding protein CysA (357 aa).

One can recognise an ABC transporter domain in the interval 3–237 (ITIQNLNKHF…PENAFVTEFL (235 aa)). Position 35-42 (35-42 (GPSGCGKT)) interacts with ATP.

This sequence belongs to the ABC transporter superfamily. Sulfate/tungstate importer (TC 3.A.1.6) family. As to quaternary structure, the complex is composed of two ATP-binding proteins (CysA), two transmembrane proteins (CysT and CysW) and a solute-binding protein (CysP).

It is found in the cell inner membrane. The enzyme catalyses sulfate(out) + ATP + H2O = sulfate(in) + ADP + phosphate + H(+). It carries out the reaction thiosulfate(out) + ATP + H2O = thiosulfate(in) + ADP + phosphate + H(+). In terms of biological role, part of the ABC transporter complex CysAWTP involved in sulfate/thiosulfate import. Responsible for energy coupling to the transport system. This Neisseria meningitidis serogroup B (strain ATCC BAA-335 / MC58) protein is Sulfate/thiosulfate import ATP-binding protein CysA.